The following is a 304-amino-acid chain: uncharacterized protein (304 aa).

9 consecutive transmembrane segments (helical) span residues 9-29, 67-87, 100-120, 131-151, 159-179, 189-209, 222-242, 252-272, and 278-298; these read VFYVLLMGLGFPIMRFMSIHF, IILYLFIYLFILGIFMTGNMF, AGSIFGILAMPLAIIIAGIFF, EFYIGELLAIIGSLIFVINSS, FFLGAIFLFTAIFIQSVQNLI, AVVISASTATISGVLFLCLAF, IGMLIGLVCAGFYGMLTGMLM, ITVFNILQLLIPLSTAIIGYL, and INIYQGISGIIVIIGCVLALK. 2 consecutive EamA domains span residues 13-148 and 171-298; these read LLMG…IFVI and FIQS…LALK.

Belongs to the EamA transporter family.

The protein localises to the cell membrane. This is an uncharacterized protein from Haemophilus influenzae (strain ATCC 51907 / DSM 11121 / KW20 / Rd).